The chain runs to 302 residues: Putative glycine N-acyltransferase-like protein 1B (302 aa).

The protein belongs to the glycine N-acyltransferase family.

The enzyme catalyses an acyl-CoA + L-glutamine = an N(2)-acyl-L-glutamine + CoA + H(+). In terms of biological role, putative acyltransferase which transfers an acyl group to the N-terminus of glutamine. Can use phenylacetyl-CoA as an acyl donor. The sequence is that of Putative glycine N-acyltransferase-like protein 1B from Homo sapiens (Human).